The sequence spans 249 residues: MAVPENLTREQCLYLAKLAEQAERYEEMVKFMDRLVAVSASSELTVEERNLLSVAYKNVIGSLRAAWRIVSSIEQKEEGRKNEEHVVLVKDYRSKVESELSDVCAGILKILDQYLIPSAAAGESKVFYLKMKGDYYRYLAEFKVGNERKEAAEDTMLAYKAAQDIALAELAPTHPIRLGLALNYSVFYYEILNASEKACSMAKQAFEEAIAELDTLGEESYKDSTLIMQLLRDNLTLWTSDMQEQMDEA.

It belongs to the 14-3-3 family.

The sequence is that of 14-3-3-like protein D from Nicotiana tabacum (Common tobacco).